Reading from the N-terminus, the 421-residue chain is tRNA(Ile)-lysidine synthase (421 aa).

26–31 (SGGADS) lines the ATP pocket.

Belongs to the tRNA(Ile)-lysidine synthase family.

The protein resides in the cytoplasm. It catalyses the reaction cytidine(34) in tRNA(Ile2) + L-lysine + ATP = lysidine(34) in tRNA(Ile2) + AMP + diphosphate + H(+). Its function is as follows. Ligates lysine onto the cytidine present at position 34 of the AUA codon-specific tRNA(Ile) that contains the anticodon CAU, in an ATP-dependent manner. Cytidine is converted to lysidine, thus changing the amino acid specificity of the tRNA from methionine to isoleucine. The polypeptide is tRNA(Ile)-lysidine synthase (Streptococcus thermophilus (strain CNRZ 1066)).